The following is a 485-amino-acid chain: Noelin (485 aa).

Residues 1-16 (MSVPLLKIGVVLSTMA) form the signal peptide. Asparagine 33, asparagine 103, asparagine 187, asparagine 288, asparagine 307, asparagine 394, asparagine 431, and asparagine 473 each carry an N-linked (GlcNAc...) asparagine glycan. Positions 87-225 (RDARTKQLRQ…ERLRACMQKL (139 aa)) form a coiled coil. The 253-residue stretch at 226-478 (ACGKLTGISD…QILYNVTLFH (253 aa)) folds into the Olfactomedin-like domain. A disulfide bridge links cysteine 227 with cysteine 409.

As to quaternary structure, homotetramer; disulfide-linked. Dimer of dimers, giving rise to a V-shaped homotretramer. Component of the AMPAR complex. In terms of processing, glycosylated.

The protein localises to the secreted. The protein resides in the synapse. It is found in the endoplasmic reticulum. Its subcellular location is the cell projection. It localises to the axon. The protein localises to the perikaryon. Its function is as follows. Contributes to the regulation of axonal growth. May play an important role in regulating the production of neural crest cells by the neural tube. The polypeptide is Noelin (OLFM1) (Gallus gallus (Chicken)).